The chain runs to 73 residues: Cell division protein ZapB (73 aa).

Residues 3-66 adopt a coiled-coil conformation; it reads LELLSQLETK…SWSDKVNGLV (64 aa).

The protein belongs to the ZapB family. As to quaternary structure, homodimer. The ends of the coiled-coil dimer bind to each other, forming polymers. Interacts with FtsZ.

The protein localises to the cytoplasm. Its function is as follows. Non-essential, abundant cell division factor that is required for proper Z-ring formation. It is recruited early to the divisome by direct interaction with FtsZ, stimulating Z-ring assembly and thereby promoting cell division earlier in the cell cycle. Its recruitment to the Z-ring requires functional FtsA or ZipA. This chain is Cell division protein ZapB, found in Shewanella frigidimarina (strain NCIMB 400).